Here is a 415-residue protein sequence, read N- to C-terminus: S-inosyl-L-homocysteine hydrolase (415 aa).

The substrate site is built by D123 and E148. 149–151 contributes to the NAD(+) binding site; that stretch reads TTT. Substrate contacts are provided by K178 and D182. NAD(+) contacts are provided by residues N183, 212–217, E235, 291–293, and N337; these read GYGWCG and AGH.

The protein belongs to the adenosylhomocysteinase family. In terms of assembly, exists both as a homotetramer and a homodimer, in a 4:1 ratio. NAD(+) serves as cofactor.

It localises to the cytoplasm. The catalysed reaction is S-inosyl-L-homocysteine + H2O = L-homocysteine + inosine. The protein operates within amino-acid biosynthesis; S-adenosyl-L-methionine biosynthesis. In terms of biological role, catalyzes the hydrolysis of S-inosyl-L-homocysteine (SIH) to L-homocysteine (Hcy) and inosine. Likely functions in a S-adenosyl-L-methionine (SAM) recycling pathway from S-adenosyl-L-homocysteine (SAH) produced from SAM-dependent methylation reactions. Can also catalyze the reverse reaction in vitro, i.e. the synthesis of SIH from Hcy and inosine. Is specific for SIH and inosine as it is unable to either hydrolyze SAH or synthesize SAH from adenosine and Hcy. The polypeptide is S-inosyl-L-homocysteine hydrolase (Methanocaldococcus jannaschii (strain ATCC 43067 / DSM 2661 / JAL-1 / JCM 10045 / NBRC 100440) (Methanococcus jannaschii)).